The following is a 366-amino-acid chain: ATP-dependent 6-phosphofructokinase (366 aa).

Residues G16, 78–79 (RE), and 118–121 (GNGT) contribute to the ATP site. The tract at residues 74 to 94 (LGTSREKPFKPDPGEKDSEAG) is disordered. Positions 77-94 (SREKPFKPDPGEKDSEAG) are enriched in basic and acidic residues. Mg(2+) is bound at residue N119. Residues 141-143 (TID), R178, 185-187 (MGH), E238, R282, and 288-291 (YLQR) contribute to the substrate site. Residue D143 is the Proton acceptor of the active site.

It belongs to the phosphofructokinase type A (PFKA) family. Mixed-substrate PFK group III subfamily. As to quaternary structure, homodimer or homotetramer. The cofactor is Mg(2+).

It is found in the cytoplasm. It catalyses the reaction beta-D-fructose 6-phosphate + ATP = beta-D-fructose 1,6-bisphosphate + ADP + H(+). It participates in carbohydrate degradation; glycolysis; D-glyceraldehyde 3-phosphate and glycerone phosphate from D-glucose: step 3/4. In terms of biological role, catalyzes the phosphorylation of D-fructose 6-phosphate to fructose 1,6-bisphosphate by ATP, the first committing step of glycolysis. This chain is ATP-dependent 6-phosphofructokinase, found in Spirochaeta thermophila (strain ATCC 49972 / DSM 6192 / RI 19.B1).